Reading from the N-terminus, the 259-residue chain is Phosphatidylserine decarboxylase proenzyme (259 aa).

Catalysis depends on charge relay system; for autoendoproteolytic cleavage activity residues D86, H142, and S226. S226 functions as the Schiff-base intermediate with substrate; via pyruvic acid; for decarboxylase activity in the catalytic mechanism. A Pyruvic acid (Ser); by autocatalysis modification is found at S226.

The protein belongs to the phosphatidylserine decarboxylase family. PSD-B subfamily. Prokaryotic type I sub-subfamily. In terms of assembly, heterodimer of a large membrane-associated beta subunit and a small pyruvoyl-containing alpha subunit. Pyruvate serves as cofactor. In terms of processing, is synthesized initially as an inactive proenzyme. Formation of the active enzyme involves a self-maturation process in which the active site pyruvoyl group is generated from an internal serine residue via an autocatalytic post-translational modification. Two non-identical subunits are generated from the proenzyme in this reaction, and the pyruvate is formed at the N-terminus of the alpha chain, which is derived from the carboxyl end of the proenzyme. The autoendoproteolytic cleavage occurs by a canonical serine protease mechanism, in which the side chain hydroxyl group of the serine supplies its oxygen atom to form the C-terminus of the beta chain, while the remainder of the serine residue undergoes an oxidative deamination to produce ammonia and the pyruvoyl prosthetic group on the alpha chain. During this reaction, the Ser that is part of the protease active site of the proenzyme becomes the pyruvoyl prosthetic group, which constitutes an essential element of the active site of the mature decarboxylase.

It localises to the cell membrane. The enzyme catalyses a 1,2-diacyl-sn-glycero-3-phospho-L-serine + H(+) = a 1,2-diacyl-sn-glycero-3-phosphoethanolamine + CO2. The protein operates within phospholipid metabolism; phosphatidylethanolamine biosynthesis; phosphatidylethanolamine from CDP-diacylglycerol: step 2/2. Its function is as follows. Catalyzes the formation of phosphatidylethanolamine (PtdEtn) from phosphatidylserine (PtdSer). The polypeptide is Phosphatidylserine decarboxylase proenzyme (Halalkalibacterium halodurans (strain ATCC BAA-125 / DSM 18197 / FERM 7344 / JCM 9153 / C-125) (Bacillus halodurans)).